The sequence spans 117 residues: Large ribosomal subunit protein bL20 (117 aa).

Belongs to the bacterial ribosomal protein bL20 family.

Binds directly to 23S ribosomal RNA and is necessary for the in vitro assembly process of the 50S ribosomal subunit. It is not involved in the protein synthesizing functions of that subunit. This is Large ribosomal subunit protein bL20 from Helicobacter hepaticus (strain ATCC 51449 / 3B1).